A 607-amino-acid polypeptide reads, in one-letter code: UvrABC system protein C (607 aa).

Positions 16–94 constitute a GIY-YIG domain; the sequence is ARPGVYRMFD…IKQWRPPYNI (79 aa). One can recognise a UVR domain in the interval 203–238; sequence QQLGNELNAEMEKAAMALNFEKAAELRDQIALLRRV.

The protein belongs to the UvrC family. Interacts with UvrB in an incision complex.

The protein resides in the cytoplasm. In terms of biological role, the UvrABC repair system catalyzes the recognition and processing of DNA lesions. UvrC both incises the 5' and 3' sides of the lesion. The N-terminal half is responsible for the 3' incision and the C-terminal half is responsible for the 5' incision. The polypeptide is UvrABC system protein C (Pseudomonas putida (strain W619)).